A 434-amino-acid polypeptide reads, in one-letter code: Enolase (434 aa).

Residue Gln165 participates in (2R)-2-phosphoglycerate binding. Residue Glu207 is the Proton donor of the active site. Mg(2+) is bound by residues Asp244, Glu291, and Asp318. Lys343, Arg372, Ser373, and Lys394 together coordinate (2R)-2-phosphoglycerate. Lys343 serves as the catalytic Proton acceptor.

This sequence belongs to the enolase family. The cofactor is Mg(2+).

The protein resides in the cytoplasm. It is found in the secreted. Its subcellular location is the cell surface. The enzyme catalyses (2R)-2-phosphoglycerate = phosphoenolpyruvate + H2O. It functions in the pathway carbohydrate degradation; glycolysis; pyruvate from D-glyceraldehyde 3-phosphate: step 4/5. In terms of biological role, catalyzes the reversible conversion of 2-phosphoglycerate (2-PG) into phosphoenolpyruvate (PEP). It is essential for the degradation of carbohydrates via glycolysis. This Staphylococcus haemolyticus (strain JCSC1435) protein is Enolase.